The primary structure comprises 447 residues: Signal recognition particle 54 kDa protein (447 aa).

GTP is bound by residues 103–110, 185–189, and 245–248; these read GVQGSGKT, DTAGR, and TKMD.

This sequence belongs to the GTP-binding SRP family. SRP54 subfamily. In terms of assembly, part of the signal recognition particle protein translocation system, which is composed of SRP and FtsY. Archaeal SRP consists of a 7S RNA molecule of 300 nucleotides and two protein subunits: SRP54 and SRP19.

It localises to the cytoplasm. The catalysed reaction is GTP + H2O = GDP + phosphate + H(+). Its function is as follows. Involved in targeting and insertion of nascent membrane proteins into the cytoplasmic membrane. Binds to the hydrophobic signal sequence of the ribosome-nascent chain (RNC) as it emerges from the ribosomes. The SRP-RNC complex is then targeted to the cytoplasmic membrane where it interacts with the SRP receptor FtsY. This chain is Signal recognition particle 54 kDa protein, found in Saccharolobus solfataricus (strain ATCC 35092 / DSM 1617 / JCM 11322 / P2) (Sulfolobus solfataricus).